Consider the following 182-residue polypeptide: Lipoprotein signal peptidase (182 aa).

4 consecutive transmembrane segments (helical) span residues 15 to 35 (LYIGVIFLGIILDLVTKFLVI), 44 to 64 (LEVLGSFFRMTLTFNTGFVFG), 65 to 85 (AFQDNAIPSLIATGIAIVFLI), and 97 to 117 (PWGWNLVMAGAFGNFLDKFFV). Active-site residues include aspartate 140 and aspartate 162. Residues 155-175 (WPAFNVADSCVTIGLTILIFT) form a helical membrane-spanning segment.

This sequence belongs to the peptidase A8 family.

The protein resides in the cell inner membrane. The enzyme catalyses Release of signal peptides from bacterial membrane prolipoproteins. Hydrolyzes -Xaa-Yaa-Zaa-|-(S,diacylglyceryl)Cys-, in which Xaa is hydrophobic (preferably Leu), and Yaa (Ala or Ser) and Zaa (Gly or Ala) have small, neutral side chains.. It participates in protein modification; lipoprotein biosynthesis (signal peptide cleavage). In terms of biological role, this protein specifically catalyzes the removal of signal peptides from prolipoproteins. In Leptospira borgpetersenii serovar Hardjo-bovis (strain L550), this protein is Lipoprotein signal peptidase.